The primary structure comprises 541 residues: Ankyrin repeat domain-containing protein 13C (541 aa).

Basic and acidic residues predominate over residues 1 to 20 (MTGEKIRSLRRDHKPSKEDG). Residues 1–53 (MTGEKIRSLRRDHKPSKEDGDVLEPCEEEATAALGGAFTGGRSGPGGSGKGGK) form a disordered region. Positions 21–30 (DVLEPCEEEA) are enriched in acidic residues. Over residues 37–52 (AFTGGRSGPGGSGKGG) the composition is skewed to gly residues. 3 ANK repeats span residues 111 to 142 (PSLYPVHECVFKGDVRRLSSLIRTHNIGQKDN), 143 to 172 (HGNTPLHLAVMLGNKECAHLLLAHNAPVKV), and 176 to 205 (QGWSPLAEAISYGDRQMITALLRKLKQQSR). At Ser411 the chain carries Phosphoserine.

It is found in the endoplasmic reticulum membrane. Acts as a molecular chaperone for G protein-coupled receptors, regulating their biogenesis and exit from the ER. The chain is Ankyrin repeat domain-containing protein 13C (Ankrd13c) from Mus musculus (Mouse).